The following is a 500-amino-acid chain: Type-2 serine--tRNA ligase (500 aa).

Residue A305 participates in L-serine binding. Position 307 (C307) interacts with Zn(2+). R337 is an L-serine binding site. ATP contacts are provided by residues 337–339 (RYE) and 348–349 (RV). L-serine is bound by residues 354–356 (RIE) and Q401. Position 356 (E356) interacts with Zn(2+). Residue E430 participates in ATP binding. An L-serine-binding site is contributed by N433. Residue C459 participates in Zn(2+) binding. Residue R466 participates in ATP binding.

Belongs to the class-II aminoacyl-tRNA synthetase family. Type-2 seryl-tRNA synthetase subfamily. As to quaternary structure, homodimer. The cofactor is Zn(2+).

It localises to the cytoplasm. It catalyses the reaction tRNA(Ser) + L-serine + ATP = L-seryl-tRNA(Ser) + AMP + diphosphate + H(+). It carries out the reaction tRNA(Sec) + L-serine + ATP = L-seryl-tRNA(Sec) + AMP + diphosphate + H(+). It functions in the pathway aminoacyl-tRNA biosynthesis; selenocysteinyl-tRNA(Sec) biosynthesis; L-seryl-tRNA(Sec) from L-serine and tRNA(Sec): step 1/1. Its function is as follows. Catalyzes the attachment of serine to tRNA(Ser). Is also able to aminoacylate tRNA(Sec) with serine, to form the misacylated tRNA L-seryl-tRNA(Sec), which will be further converted into selenocysteinyl-tRNA(Sec). This chain is Type-2 serine--tRNA ligase, found in Methanothrix thermoacetophila (strain DSM 6194 / JCM 14653 / NBRC 101360 / PT) (Methanosaeta thermophila).